We begin with the raw amino-acid sequence, 106 residues long: MSSLSEYALRMSRLSARLFSEVARPTDSKSMKVVKLFSEQPLAKRKETYDWYPNHNTYFALMGILRSVGLYRDEHQDFKDEQLRLKKLRGKVKPRKGEGKRAAKKK.

S2 is subject to N-acetylserine. Over residues 85–94 (LKKLRGKVKP) the composition is skewed to basic residues. The segment at 85–106 (LKKLRGKVKPRKGEGKRAAKKK) is disordered. Residues 95 to 106 (RKGEGKRAAKKK) show a composition bias toward basic and acidic residues.

This sequence belongs to the mitochondrion-specific ribosomal protein mS33 family. As to quaternary structure, component of the mitochondrial ribosome small subunit (28S) which comprises a 12S rRNA and about 30 distinct proteins.

Its subcellular location is the mitochondrion. The sequence is that of Small ribosomal subunit protein mS33 from Bos taurus (Bovine).